Reading from the N-terminus, the 231-residue chain is Uroporphyrinogen-III C-methyltransferase (231 aa).

Residues Pro10, 85–87 (GGD), 115–116 (TS), Met166, and Ala218 each bind S-adenosyl-L-homocysteine.

The protein belongs to the precorrin methyltransferase family. As to quaternary structure, homodimer.

The enzyme catalyses uroporphyrinogen III + 2 S-adenosyl-L-methionine = precorrin-2 + 2 S-adenosyl-L-homocysteine + H(+). The catalysed reaction is uroporphyrinogen III + S-adenosyl-L-methionine = precorrin-1 + S-adenosyl-L-homocysteine + H(+). It carries out the reaction precorrin-1 + S-adenosyl-L-methionine = precorrin-2 + S-adenosyl-L-homocysteine. The protein operates within cofactor biosynthesis; adenosylcobalamin biosynthesis; precorrin-2 from uroporphyrinogen III: step 1/1. Does not show substrate inhibition at uroporphyrinogen III concentrations of up to 20 uM, in contrast to SUMT from Sinorhizobium (previously believed to be P.denitrificans). In terms of biological role, catalyzes the two successive C-2 and C-7 methylation reactions involved in the conversion of uroporphyrinogen III to precorrin-2 via the intermediate formation of precorrin-1. It is a step in the biosynthesis of both cobalamin (vitamin B12) and coenzyme F430. The chain is Uroporphyrinogen-III C-methyltransferase (cobA) from Methanobacterium ivanovii.